The following is a 126-amino-acid chain: Aspartate 1-decarboxylase (126 aa).

Catalysis depends on Ser25, which acts as the Schiff-base intermediate with substrate; via pyruvic acid. Ser25 bears the Pyruvic acid (Ser) mark. Thr57 provides a ligand contact to substrate. The active-site Proton donor is Tyr58. 73-75 (GAA) provides a ligand contact to substrate.

Belongs to the PanD family. As to quaternary structure, heterooctamer of four alpha and four beta subunits. It depends on pyruvate as a cofactor. Post-translationally, is synthesized initially as an inactive proenzyme, which is activated by self-cleavage at a specific serine bond to produce a beta-subunit with a hydroxyl group at its C-terminus and an alpha-subunit with a pyruvoyl group at its N-terminus.

Its subcellular location is the cytoplasm. It catalyses the reaction L-aspartate + H(+) = beta-alanine + CO2. The protein operates within cofactor biosynthesis; (R)-pantothenate biosynthesis; beta-alanine from L-aspartate: step 1/1. Catalyzes the pyruvoyl-dependent decarboxylation of aspartate to produce beta-alanine. This Photorhabdus laumondii subsp. laumondii (strain DSM 15139 / CIP 105565 / TT01) (Photorhabdus luminescens subsp. laumondii) protein is Aspartate 1-decarboxylase.